Here is a 383-residue protein sequence, read N- to C-terminus: Schlafen-like protein 3 (383 aa).

The SLFN-like fold stretch occupies residues 118–266 (FDYQSNFSDV…SDKVYQISSG (149 aa)). Residues 354 to 374 (LLDIQNIGWIFFGTALSFCIY) form a helical membrane-spanning segment.

The protein belongs to the Schlafen family. Component of the PUCH (precursor of 21U RNA 5'-end cleavage holoenzyme) complex; consisting of tofu-1, tofu-2 and either slfl-3 or slfl-4. Within the complex, interacts (via N-terminus) with tofu-2 (via N-terminus); the presence of tofu-1 is required for the interaction.

It localises to the mitochondrion membrane. Functionally, component of the trimeric PUCH (precursor of 21U RNA 5'-end cleavage holoenzyme) complex, that acts as an endoribonuclease processing the 5'-end of precursor Piwi-interacting RNAs (piRNAs). The PUCH complex consists of tofu-1, tofu-2 and either slfl-3 or slfl-4, where tofu-2 exhibits endoribonuclease activity. PUCH-mediated processing strictly requires a 7-methyl-G cap (m7 G-cap) and an uracil at position three (U3). PUCH also exhibits a strict bias for piRNA precursors with an A or G at position 1. Mature piRNA production is enhanced by the interaction of PUCH with the PETISCO complex, which is stabilizing piRNA precursors and allows their processing by PUCH. The polypeptide is Schlafen-like protein 3 (Caenorhabditis elegans).